The chain runs to 28 residues: Cruzioseptin-3 (28 aa).

The residue at position 25 (glutamine 25) is a Glutamine amide. Residues 27–28 constitute a propeptide that is removed on maturation; that stretch reads EQ.

In terms of tissue distribution, expressed by the skin glands.

It is found in the secreted. In terms of biological role, has antimicrobial activity against Gram-negative bacterium E.coli (MIC=13.32 uM), against Gram-positive bacterium S.aureus (MIC=13.32 uM) and against fungus C.albicans (MIC=13.32 uM). At higher concentrations also has a bactericidal and fungicidal effect. Has hemagglutinating activity against horse erythrocytes. In Cruziohyla calcarifer (Splendid leaf frog), this protein is Cruzioseptin-3.